The sequence spans 330 residues: tRNA U34 carboxymethyltransferase (330 aa).

Residues K91, W105, K110, G130, 152–154 (DPS), 181–182 (IE), M196, Y200, and R315 contribute to the carboxy-S-adenosyl-L-methionine site.

This sequence belongs to the class I-like SAM-binding methyltransferase superfamily. CmoB family. Homotetramer.

It catalyses the reaction carboxy-S-adenosyl-L-methionine + 5-hydroxyuridine(34) in tRNA = 5-carboxymethoxyuridine(34) in tRNA + S-adenosyl-L-homocysteine + H(+). In terms of biological role, catalyzes carboxymethyl transfer from carboxy-S-adenosyl-L-methionine (Cx-SAM) to 5-hydroxyuridine (ho5U) to form 5-carboxymethoxyuridine (cmo5U) at position 34 in tRNAs. The polypeptide is tRNA U34 carboxymethyltransferase (Shewanella loihica (strain ATCC BAA-1088 / PV-4)).